The sequence spans 190 residues: MLLSDRDLRAEISAGRLGIDPFDDSLVQPSSVDVRLDCMFRVFNNTRYTHIDPAQRQDELTSAVEPTKGDPFVLHPGEFVLGSTLEIFSLPGDLAGRLEGKSSLGRLGLLTHSTAGFIDPGFSGHITLELSNVANLPITLWPGMKIGQLCILKLTSPSEHPYGSSGVGSKYQGQRGPTPSRSYQNFIRST.

DCTP contacts are provided by residues 101–106 (KSSLGR), Asp-119, 127–129 (TLE), Gln-148, Tyr-162, and Gln-174. Glu-129 (proton donor/acceptor) is an active-site residue. The segment at 161 to 190 (PYGSSGVGSKYQGQRGPTPSRSYQNFIRST) is disordered. Residues 171–190 (YQGQRGPTPSRSYQNFIRST) are compositionally biased toward polar residues.

Belongs to the dCTP deaminase family. As to quaternary structure, homotrimer.

The catalysed reaction is dCTP + 2 H2O = dUMP + NH4(+) + diphosphate. The protein operates within pyrimidine metabolism; dUMP biosynthesis; dUMP from dCTP: step 1/1. Its function is as follows. Bifunctional enzyme that catalyzes both the deamination of dCTP to dUTP and the hydrolysis of dUTP to dUMP without releasing the toxic dUTP intermediate. This chain is dCTP deaminase, dUMP-forming, found in Mycobacterium ulcerans (strain Agy99).